The primary structure comprises 271 residues: Transmembrane protein 150A (271 aa).

The Cytoplasmic portion of the chain corresponds to 1–3 (MTG). A helical membrane pass occupies residues 4 to 24 (WIVLPISLTAFSIPGIWIVYA). Residues 25–75 (MAVMNHHVCPVENWTYNLTCTDDNTKAGTPKSCCTLEDVPLISKCGTYPPE) are Extracellular-facing. Residues asparagine 37 and asparagine 41 are each glycosylated (N-linked (GlcNAc...) asparagine). The chain crosses the membrane as a helical span at residues 76 to 96 (SCLFSLIGNVGAFMVVIICLL). Residues 97 to 108 (RYSQVIEISQRS) are Cytoplasmic-facing. The helical transmembrane segment at 109-129 (WLNTTALIAGCTNAAGLVMVG) threads the bilayer. At 130-140 (NFQVDYAKSLH) the chain is on the extracellular side. A helical membrane pass occupies residues 141–161 (YIGAGVAFPAGLLFVCLSSIL). Topologically, residues 162-182 (SYQLAASALDYWLGHLRVSLT) are cytoplasmic. The helical transmembrane segment at 183–203 (IVALISLVLTGVFFIQESFLM) threads the bilayer. Topologically, residues 204 to 205 (QH) are extracellular. A helical transmembrane segment spans residues 206 to 226 (LVAICEWIFVLDILVFYGTFA). The Cytoplasmic portion of the chain corresponds to 227 to 271 (YEFGSVSTDTMMAALQSSAARSCKSPGSSSTSTQLHCNAERIAMI).

This sequence belongs to the DRAM/TMEM150 family.

The protein resides in the cell membrane. Its function is as follows. Regulates localization of phosphatidylinositol 4-kinase (PI4K) to the plasma membrane. This Xenopus laevis (African clawed frog) protein is Transmembrane protein 150A (tmem150a).